Consider the following 184-residue polypeptide: ATP synthase subunit delta (184 aa).

The protein belongs to the ATPase delta chain family. F-type ATPases have 2 components, F(1) - the catalytic core - and F(0) - the membrane proton channel. F(1) has five subunits: alpha(3), beta(3), gamma(1), delta(1), epsilon(1). F(0) has three main subunits: a(1), b(2) and c(10-14). The alpha and beta chains form an alternating ring which encloses part of the gamma chain. F(1) is attached to F(0) by a central stalk formed by the gamma and epsilon chains, while a peripheral stalk is formed by the delta and b chains.

It localises to the cell inner membrane. Functionally, f(1)F(0) ATP synthase produces ATP from ADP in the presence of a proton or sodium gradient. F-type ATPases consist of two structural domains, F(1) containing the extramembraneous catalytic core and F(0) containing the membrane proton channel, linked together by a central stalk and a peripheral stalk. During catalysis, ATP synthesis in the catalytic domain of F(1) is coupled via a rotary mechanism of the central stalk subunits to proton translocation. In terms of biological role, this protein is part of the stalk that links CF(0) to CF(1). It either transmits conformational changes from CF(0) to CF(1) or is implicated in proton conduction. The chain is ATP synthase subunit delta from Rickettsia massiliae (strain Mtu5).